A 286-amino-acid polypeptide reads, in one-letter code: Putative sugar uptake protein lmo0176 (286 aa).

The next 8 helical transmembrane spans lie at 4-26 (MIAL…FGGS), 33-55 (GMTL…VYTL), 114-136 (LRII…TSYA), 149-167 (GLIT…VVLI), 177-194 (AILP…IMTH), 207-226 (LLLT…MVHA), 230-252 (VGVA…GGII), and 264-283 (LFVI…IGVA).

It belongs to the GRP transporter (TC 2.A.7.5) family.

It localises to the cell membrane. This chain is Putative sugar uptake protein lmo0176, found in Listeria monocytogenes serovar 1/2a (strain ATCC BAA-679 / EGD-e).